Here is a 200-residue protein sequence, read N- to C-terminus: Dephospho-CoA kinase (200 aa).

Residues 4–200 form the DPCK domain; that stretch reads TIGLTGSVAT…TFIKRFVKNK (197 aa). An ATP-binding site is contributed by 12–17; that stretch reads ATGKST.

The protein belongs to the CoaE family.

The protein resides in the cytoplasm. It carries out the reaction 3'-dephospho-CoA + ATP = ADP + CoA + H(+). It participates in cofactor biosynthesis; coenzyme A biosynthesis; CoA from (R)-pantothenate: step 5/5. In terms of biological role, catalyzes the phosphorylation of the 3'-hydroxyl group of dephosphocoenzyme A to form coenzyme A. The polypeptide is Dephospho-CoA kinase (Listeria monocytogenes serotype 4b (strain F2365)).